A 61-amino-acid chain; its full sequence is Small ribosomal subunit protein uS14 (61 aa).

Positions 24, 27, 40, and 43 each coordinate Zn(2+).

Belongs to the universal ribosomal protein uS14 family. Zinc-binding uS14 subfamily. As to quaternary structure, part of the 30S ribosomal subunit. Contacts proteins S3 and S10. Requires Zn(2+) as cofactor.

Binds 16S rRNA, required for the assembly of 30S particles and may also be responsible for determining the conformation of the 16S rRNA at the A site. The polypeptide is Small ribosomal subunit protein uS14 (Geobacter sp. (strain M21)).